Consider the following 106-residue polypeptide: Large ribosomal subunit protein eL42 (106 aa).

The disordered stretch occupies residues 34-53 (YAQGRRRYDRKRSGYGGQTK). Lys-53 carries the post-translational modification N6-methyllysine.

Belongs to the eukaryotic ribosomal protein eL42 family.

It is found in the cytoplasm. In Pongo abelii (Sumatran orangutan), this protein is Large ribosomal subunit protein eL42 (RPL36AL).